Consider the following 282-residue polypeptide: ATP synthase gamma chain (282 aa).

This sequence belongs to the ATPase gamma chain family. In terms of assembly, F-type ATPases have 2 components, CF(1) - the catalytic core - and CF(0) - the membrane proton channel. CF(1) has five subunits: alpha(3), beta(3), gamma(1), delta(1), epsilon(1). CF(0) has three main subunits: a, b and c. In this bacterium the a and b subunits are transcribed but do not seem to be translated, thus the ATP synthase consists of the alpha, beta, gamma, delta, epsilon and c subunits.

The protein localises to the cell membrane. In terms of biological role, produces ATP from ADP in the presence of a proton gradient across the membrane. The gamma chain is believed to be important in regulating ATPase activity and the flow of protons through the CF(0) complex. This Moorella thermoacetica (strain ATCC 39073 / JCM 9320) protein is ATP synthase gamma chain.